The chain runs to 144 residues: Galectin a (144 aa).

One can recognise a Galectin domain in the interval 1-138; it reads DHIDLEFDVG…DAVLRKLCVV (138 aa).

As to quaternary structure, tetramer.

Lectin that binds beta-galactoside and a wide array of complex carbohydrates. This is Galectin a from Aplysina lactuca (Marine sponge).